The sequence spans 502 residues: UPF0371 protein CLH_2534 (502 aa).

It belongs to the UPF0371 family.

This Clostridium botulinum (strain Alaska E43 / Type E3) protein is UPF0371 protein CLH_2534.